A 386-amino-acid polypeptide reads, in one-letter code: TRIBOA-glucoside O-methyltransferase BX7 (386 aa).

S-adenosyl-L-methionine is bound by residues glycine 224, aspartate 248, methionine 270, and lysine 283. Residue histidine 287 is the Proton acceptor of the active site.

This sequence belongs to the class I-like SAM-binding methyltransferase superfamily. Cation-independent O-methyltransferase family. COMT subfamily. As to expression, expressed in seedlings and newly formed crown roots. Highest expression in the scutellar node. Low to non detectable levels in cob, tassel and mature organs like husk or leaves.

The catalysed reaction is TRIBOA beta-D-glucoside + S-adenosyl-L-methionine = DIMBOA beta-D-glucoside + S-adenosyl-L-homocysteine + H(+). Functionally, O-methyltransferase involved in the benzoxazinoid glucoside biosynthesis. Can use 2,4,7-trihydroxy-2H-1,4-benzoxazin-3(4H)-one 2-D-glucoside (TRIBOA-glucoside) as substrate, but not aglucone TRIBOA, caffeic acid, ferulic acid, apigenin or quercetin. In Zea mays (Maize), this protein is TRIBOA-glucoside O-methyltransferase BX7 (BX7).